Here is a 181-residue protein sequence, read N- to C-terminus: MNDFLLISSLAELSSETKKSFGFNPNFLEANVLNIAILLSGVVYLGRNFLTSALEVRQQKVAEAIQEAEERLVQANSRLLESEKQLTQAQAVIEEIKKEAEKTARTVKESILAQGKLDIERLTNNGKSSIEKAELQIKKQIQQHITELAIQKVTVQLKEYMTPNLQSKVIDSNISNLGGQL.

Residues 31–50 (NVLNIAILLSGVVYLGRNFL) form a helical membrane-spanning segment.

It belongs to the ATPase B chain family. F-type ATPases have 2 components, F(1) - the catalytic core - and F(0) - the membrane proton channel. F(1) has five subunits: alpha(3), beta(3), gamma(1), delta(1), epsilon(1). F(0) has four main subunits: a(1), b(1), b'(1) and c(10-14). The alpha and beta chains form an alternating ring which encloses part of the gamma chain. F(1) is attached to F(0) by a central stalk formed by the gamma and epsilon chains, while a peripheral stalk is formed by the delta, b and b' chains.

The protein localises to the plastid. It localises to the chloroplast thylakoid membrane. Functionally, f(1)F(0) ATP synthase produces ATP from ADP in the presence of a proton or sodium gradient. F-type ATPases consist of two structural domains, F(1) containing the extramembraneous catalytic core and F(0) containing the membrane proton channel, linked together by a central stalk and a peripheral stalk. During catalysis, ATP synthesis in the catalytic domain of F(1) is coupled via a rotary mechanism of the central stalk subunits to proton translocation. Component of the F(0) channel, it forms part of the peripheral stalk, linking F(1) to F(0). The protein is ATP synthase subunit b, chloroplastic of Rhodomonas salina (Cryptomonas salina).